Consider the following 223-residue polypeptide: Putative 3-methyladenine DNA glycosylase (223 aa).

The protein belongs to the DNA glycosylase MPG family.

This Pseudomonas savastanoi pv. phaseolicola (strain 1448A / Race 6) (Pseudomonas syringae pv. phaseolicola (strain 1448A / Race 6)) protein is Putative 3-methyladenine DNA glycosylase.